We begin with the raw amino-acid sequence, 953 residues long: Trafficking kinesin-binding protein 1 (953 aa).

The HAP1 N-terminal domain maps to 47 to 354 (LEEQLPHYKL…EELKNLRNKT (308 aa)). Positions 104–356 (QMTKTYNDID…LKNLRNKTMP (253 aa)) form a coiled coil. The interaction with HGS stretch occupies residues 359–509 (TSRRYHSLGL…RRLSLRRENY (151 aa)). The O-linked (GlcNAc) serine glycan is linked to S447. The tract at residues 472–495 (AADLGNDERSKKPGTPGTPGSHDL) is disordered. Residues 492–532 (SHDLETALRRLSLRRENYLSERRFFEEEQERKLQELAEKGE) adopt a coiled-coil conformation. Position 537 is a phosphoserine (S537). The interaction with OGT stretch occupies residues 658–672 (PGKCMSQTNSTFTFT). 2 O-linked (GlcNAc) serine glycosylation sites follow: S680 and S719. S719 is modified (phosphoserine). The tract at residues 777-796 (VIPSTPPNSPMQTPTSSPPS) is disordered. The segment covering 786–796 (PMQTPTSSPPS) has biased composition (low complexity). S919 carries the post-translational modification Phosphoserine. O-linked (GlcNAc) threonine glycosylation is present at T935.

It belongs to the milton family. As to quaternary structure, interacts with RHOT1 and RHOT2. Found in a complex with KIF5B, OGT, RHOT1 and RHOT2. Interacts with HGS. Interacts with GABRA1. Interacts with KIF5C. Interacts with OGT; stable interaction is not required for glycosylation of this protein by OGT. Isoform 1 interacts with OGT. O-glycosylated. Glycosylated by OGT; glycosylation in response to increased extracellular glucose levels is required for and leads to regulation of mitochondrial motility by OGT. High expression in spinal cord and moderate expression in all other tissues and specific brain regions examined. Expressed in all cell lines examined.

It localises to the cytoplasm. It is found in the nucleus. The protein resides in the mitochondrion. Its subcellular location is the early endosome. The protein localises to the endosome. It localises to the mitochondrion membrane. It is found in the cell cortex. Involved in the regulation of endosome-to-lysosome trafficking, including endocytic trafficking of EGF-EGFR complexes and GABA-A receptors. Involved in mitochondrial motility. When O-glycosylated, abolishes mitochondrial motility. Crucial for recruiting OGT to the mitochondrial surface of neuronal processes. TRAK1 and RHOT form an essential protein complex that links KIF5 to mitochondria for light chain-independent, anterograde transport of mitochondria. This is Trafficking kinesin-binding protein 1 (TRAK1) from Homo sapiens (Human).